The chain runs to 222 residues: Putative O-methyltransferase MAP_2558 (222 aa).

Residues Val49, Glu71, 73–74, Ser79, Asp97, and Ile98 each bind S-adenosyl-L-methionine; that span reads GT. Asp145 is a binding site for substrate. Asp147 contacts S-adenosyl-L-methionine.

It belongs to the class I-like SAM-binding methyltransferase superfamily. Cation-dependent O-methyltransferase family.

The protein is Putative O-methyltransferase MAP_2558 of Mycolicibacterium paratuberculosis (strain ATCC BAA-968 / K-10) (Mycobacterium paratuberculosis).